A 488-amino-acid chain; its full sequence is Probable G-protein coupled receptor Mth-like 12 (488 aa).

Positions 1 to 17 are cleaved as a signal peptide; that stretch reads MFLWLKCFCTLIIVTIA. At 18–215 the chain is on the extracellular side; sequence KNSSAKIPHC…NRRCYRNVMP (198 aa). N-linked (GlcNAc...) asparagine glycans are attached at residues asparagine 19, asparagine 34, and asparagine 55. 5 cysteine pairs are disulfide-bonded: cysteine 27/cysteine 81, cysteine 83/cysteine 88, cysteine 92/cysteine 189, cysteine 93/cysteine 104, and cysteine 155/cysteine 209. N-linked (GlcNAc...) asparagine glycosylation is present at asparagine 141. Residues 216-236 traverse the membrane as a helical segment; sequence GIAQLSVISVVGFILTLAVYL. The Cytoplasmic segment spans residues 237 to 247; sequence SVEKLRNLLGK. A helical membrane pass occupies residues 248-268; it reads CLICSLFSMFMEYFIWTMDYF. Topologically, residues 269-283 are extracellular; the sequence is RLLQSICSAAGYMKY. The chain crosses the membrane as a helical span at residues 284–304; the sequence is FFSMSSYLWFSVVSFHLWELF. Over 305–315 the chain is Cytoplasmic; sequence TSLNRHEPQYR. Residues 316 to 336 traverse the membrane as a helical segment; sequence FLIYNTFVWCTAAIPTVVIFS. At 337–373 the chain is on the extracellular side; that stretch reads MNQMWENDPGKSEWLPLVGYFGCSVKDWNSSSWFYSH. The N-linked (GlcNAc...) asparagine glycan is linked to asparagine 365. A helical transmembrane segment spans residues 374 to 394; it reads IPIVILNSFNVIMFVLTAIYI. Residues 395–416 are Cytoplasmic-facing; sequence WKVKKGVKSFAQHDERNTTCLE. The helical transmembrane segment at 417 to 437 threads the bilayer; the sequence is FNVQTYIQFVRLFLIMGASWL. Over 438 to 454 the chain is Extracellular; the sequence is LDQLTRLAEDSHLLLDT. Residues 455-475 traverse the membrane as a helical segment; it reads IVLNLTVYLNAAFGILIFVLL. The Cytoplasmic segment spans residues 476–488; sequence ILKGSTFKMIMER.

It belongs to the G-protein coupled receptor 2 family. Mth subfamily.

The protein localises to the cell membrane. This Drosophila melanogaster (Fruit fly) protein is Probable G-protein coupled receptor Mth-like 12 (mthl12).